Consider the following 408-residue polypeptide: tRNA-specific 2-thiouridylase MnmA (408 aa).

ATP contacts are provided by residues 38–45 (GMSGGVDS) and methionine 64. The segment at 124 to 126 (NPD) is interaction with target base in tRNA. Residue cysteine 129 is the Nucleophile of the active site. Cysteine 129 and cysteine 231 are joined by a disulfide. Glycine 153 is an ATP binding site. An interaction with tRNA region spans residues 181–183 (KDQ). Cysteine 231 acts as the Cysteine persulfide intermediate in catalysis. Residues 348 to 349 (RY) are interaction with tRNA.

It belongs to the MnmA/TRMU family.

It is found in the cytoplasm. The catalysed reaction is S-sulfanyl-L-cysteinyl-[protein] + uridine(34) in tRNA + AH2 + ATP = 2-thiouridine(34) in tRNA + L-cysteinyl-[protein] + A + AMP + diphosphate + H(+). In terms of biological role, catalyzes the 2-thiolation of uridine at the wobble position (U34) of tRNA, leading to the formation of s(2)U34. This is tRNA-specific 2-thiouridylase MnmA from Psychrobacter arcticus (strain DSM 17307 / VKM B-2377 / 273-4).